Consider the following 198-residue polypeptide: Dynactin subunit 5 (198 aa).

The span at 179 to 188 (NTPASKGLPS) shows a compositional bias: polar residues. Positions 179–198 (NTPASKGLPSTPTKLQTTTT) are disordered. Over residues 189–198 (TPTKLQTTTT) the composition is skewed to low complexity.

It belongs to the dynactin subunits 5/6 family. Dynactin subunit 5 subfamily. Member of the pointed-end complex of the dynactin shoulder complex.

The protein localises to the cytoplasm. The protein resides in the cytoskeleton. In Dictyostelium discoideum (Social amoeba), this protein is Dynactin subunit 5 (dynE).